A 146-amino-acid chain; its full sequence is Large-conductance mechanosensitive channel (146 aa).

2 consecutive transmembrane segments (helical) span residues 12 to 32 and 88 to 108; these read AFAM…GGAF and LQAT…IKLI.

This sequence belongs to the MscL family. As to quaternary structure, homopentamer.

Its subcellular location is the cell inner membrane. Channel that opens in response to stretch forces in the membrane lipid bilayer. May participate in the regulation of osmotic pressure changes within the cell. In Bacteroides fragilis (strain ATCC 25285 / DSM 2151 / CCUG 4856 / JCM 11019 / LMG 10263 / NCTC 9343 / Onslow / VPI 2553 / EN-2), this protein is Large-conductance mechanosensitive channel.